A 158-amino-acid polypeptide reads, in one-letter code: Protein Smg homolog (158 aa).

Belongs to the Smg family.

The chain is Protein Smg homolog from Thioalkalivibrio sulfidiphilus (strain HL-EbGR7).